We begin with the raw amino-acid sequence, 1320 residues long: FERM and PDZ domain-containing protein 4 (1320 aa).

Residues 33–66 (QVPPYGWEMMTNRDGRDYFINHMTQAIPFDDPRF) form the WW domain. Positions 78-155 (KVEMRRDPVL…SILLTVIQPY (78 aa)) constitute a PDZ domain. The region spanning 204–519 (NVLKVYLENG…GYYRLLVDSR (316 aa)) is the FERM domain. Disordered regions lie at residues 809 to 847 (APPP…EIPV), 897 to 927 (YSPE…QKQS), 949 to 981 (TEFP…PPKV), 1024 to 1050 (KRKS…QQGT), 1114 to 1139 (PRGP…ADDA), and 1204 to 1274 (GHFS…ATFE). Residues 900-913 (ESSSDSGNETNSSE) are compositionally biased toward low complexity. Polar residues predominate over residues 1204-1217 (GHFSLQSSQGSSVD). Low complexity predominate over residues 1223-1232 (GSSSSACATP).

In terms of assembly, interacts (via C-terminus) with DLG1, DLG2, DLG3 and DLG4/PSD95. Interacts (via N-terminus) with ARHGEF7; the interaction is mediated by the PDZ domain. Interacts with GPSM2 (via TPR repeat region). As to expression, expressed in various regions of the brain, including cortex, hippocampus, cerebellum, olfactory bulb and medial habenular nucleus.

It is found in the cell projection. It localises to the dendritic spine. In terms of biological role, positive regulator of dendritic spine morphogenesis and density. Required for the maintenance of excitatory synaptic transmission. Binds phosphatidylinositol 4,5-bisphosphate. The protein is FERM and PDZ domain-containing protein 4 (Frmpd4) of Mus musculus (Mouse).